The primary structure comprises 210 residues: HTH-type transcriptional repressor FabR (210 aa).

Residues 10–70 enclose the HTH tetR-type domain; the sequence is KTRRSLVEAA…TMVDESGLML (61 aa). Residues 33 to 52 constitute a DNA-binding region (H-T-H motif); sequence SLREVAREAGIAPTSFYRHF.

In terms of assembly, homodimer.

It is found in the cytoplasm. In terms of biological role, represses the transcription of fabB, involved in unsaturated fatty acid (UFA) biosynthesis. By controlling UFA production, FabR directly influences the physical properties of the membrane bilayer. The chain is HTH-type transcriptional repressor FabR from Citrobacter koseri (strain ATCC BAA-895 / CDC 4225-83 / SGSC4696).